The following is a 132-amino-acid chain: MRVFKTKLIRLQLTAEELDALTADFISYKRDGVLPDIFGRDALYDDSFTWPLIKFERVAHIHLANENNPFPPQLRQFSRTNDEAHLVYCQGAFDEQAWLLIAILKPEPHKLARDNNQMHKIGKMAEAFRMRF.

In terms of assembly, probably forms a complex with the antitoxin YafN which inhibits the mRNA interferase activity.

Toxic component of a type II toxin-antitoxin (TA) system. A translation-dependent mRNA interferase. Overexpression causes cessation of cell growth and inhibits cell proliferation via inhibition of translation; this blockage is overcome by subsequent expression of antitoxin YafN. Overexpression causes cleavage of a number of mRNAs in a ribosome-dependent fashion. YafO binding to the 50S ribosomal subunit in the translation complex induces mRNA cleavage 3' to the region protected by the ribosome; YafO alone is not able to digest mRNA. The protein is mRNA interferase toxin YafO (yafO) of Escherichia coli (strain K12).